A 1355-amino-acid chain; its full sequence is Probable aldehyde oxidase 2 (1355 aa).

Residues 9 to 96 (RPVVVTVNGE…HCAVTTSEGI (88 aa)) enclose the 2Fe-2S ferredoxin-type domain. [2Fe-2S] cluster is bound by residues cysteine 48, cysteine 53, cysteine 56, and cysteine 78. In terms of domain architecture, FAD-binding PCMH-type spans 244–422 (VAVTGDGWFH…VSISIPDWGS (179 aa)). The disordered stretch occupies residues 544-577 (PENANVPNGSCTNGTANGSANSSPEKHSNVDSSD). Positions 548-566 (NVPNGSCTNGTANGSANSS) are enriched in polar residues.

It belongs to the xanthine dehydrogenase family. In terms of assembly, aldehyde oxidases (AO) are homodimers and heterodimers of AO subunits. Requires [2Fe-2S] cluster as cofactor. The cofactor is FAD. Mo-molybdopterin serves as cofactor.

The catalysed reaction is an aldehyde + O2 + H2O = a carboxylate + H2O2 + H(+). The chain is Probable aldehyde oxidase 2 from Oryza sativa subsp. japonica (Rice).